Here is an 81-residue protein sequence, read N- to C-terminus: ATP synthase subunit c, chloroplastic (81 aa).

A run of 2 helical transmembrane segments spans residues 4 to 24 (VISA…SIGP) and 57 to 77 (LAFM…LLFA).

The protein belongs to the ATPase C chain family. As to quaternary structure, F-type ATPases have 2 components, F(1) - the catalytic core - and F(0) - the membrane proton channel. F(1) has five subunits: alpha(3), beta(3), gamma(1), delta(1), epsilon(1). F(0) has four main subunits: a(1), b(1), b'(1) and c(10-14). The alpha and beta chains form an alternating ring which encloses part of the gamma chain. F(1) is attached to F(0) by a central stalk formed by the gamma and epsilon chains, while a peripheral stalk is formed by the delta, b and b' chains.

It is found in the plastid. The protein resides in the chloroplast thylakoid membrane. Its function is as follows. F(1)F(0) ATP synthase produces ATP from ADP in the presence of a proton or sodium gradient. F-type ATPases consist of two structural domains, F(1) containing the extramembraneous catalytic core and F(0) containing the membrane proton channel, linked together by a central stalk and a peripheral stalk. During catalysis, ATP synthesis in the catalytic domain of F(1) is coupled via a rotary mechanism of the central stalk subunits to proton translocation. Functionally, key component of the F(0) channel; it plays a direct role in translocation across the membrane. A homomeric c-ring of between 10-14 subunits forms the central stalk rotor element with the F(1) delta and epsilon subunits. The chain is ATP synthase subunit c, chloroplastic from Zygnema circumcarinatum (Green alga).